Consider the following 363-residue polypeptide: tRNA N6-adenosine threonylcarbamoyltransferase (363 aa).

Residues His-138, His-142, and Tyr-159 each contribute to the Fe cation site. Substrate contacts are provided by residues 159-163 (YVSGG), Asp-191, Asp-212, and Ser-295. Residue Asp-323 coordinates Fe cation.

Belongs to the KAE1 / TsaD family. The cofactor is Fe(2+).

It is found in the cytoplasm. It catalyses the reaction L-threonylcarbamoyladenylate + adenosine(37) in tRNA = N(6)-L-threonylcarbamoyladenosine(37) in tRNA + AMP + H(+). Functionally, required for the formation of a threonylcarbamoyl group on adenosine at position 37 (t(6)A37) in tRNAs that read codons beginning with adenine. Is probably involved in the transfer of the threonylcarbamoyl moiety of threonylcarbamoyl-AMP (TC-AMP) to the N6 group of A37. This is tRNA N6-adenosine threonylcarbamoyltransferase from Hyperthermus butylicus (strain DSM 5456 / JCM 9403 / PLM1-5).